The sequence spans 216 residues: Orotate phosphoribosyltransferase (216 aa).

Residues arginine 100, lysine 104, histidine 106, and 126–134 (EDLISTGGS) each bind 5-phospho-alpha-D-ribose 1-diphosphate. An orotate-binding site is contributed by serine 130.

It belongs to the purine/pyrimidine phosphoribosyltransferase family. PyrE subfamily. Homodimer. Interacts with BrxC. Mg(2+) serves as cofactor.

The catalysed reaction is orotidine 5'-phosphate + diphosphate = orotate + 5-phospho-alpha-D-ribose 1-diphosphate. The protein operates within pyrimidine metabolism; UMP biosynthesis via de novo pathway; UMP from orotate: step 1/2. Its function is as follows. Catalyzes the transfer of a ribosyl phosphate group from 5-phosphoribose 1-diphosphate to orotate, leading to the formation of orotidine monophosphate (OMP). The chain is Orotate phosphoribosyltransferase from Bacillus subtilis (strain 168).